A 195-amino-acid chain; its full sequence is MTKVKICGLSTASAVETACQAGADYIGFVFAESRRRVSLEQAQKLAALVPSTVRKVGVFVSPSLAELQEAISVANLDLVQIHGDFDEELLTQIDRPVIQAYQVKGALKDVSQQADYLLFDAPLAGSGRTFDWQAFDKSQIHQPFFIAGGLNAGNVREAIQHFAPYAVDVSSGVETDAQKDLEKIKEFIERVKDGI.

The protein belongs to the TrpF family.

The catalysed reaction is N-(5-phospho-beta-D-ribosyl)anthranilate = 1-(2-carboxyphenylamino)-1-deoxy-D-ribulose 5-phosphate. It functions in the pathway amino-acid biosynthesis; L-tryptophan biosynthesis; L-tryptophan from chorismate: step 3/5. This Streptococcus gordonii (strain Challis / ATCC 35105 / BCRC 15272 / CH1 / DL1 / V288) protein is N-(5'-phosphoribosyl)anthranilate isomerase.